A 199-amino-acid polypeptide reads, in one-letter code: MAENSNIDDIKAPLLAALGAADLALATVNELITNLRERAEETRTDTRSRVEESRARLTKLQEDLPEQLTELREKFTAEELRKAAEGYLEAATSRYNELVERGEAALERLRSQQSFEEVSARAEGYVDQAVELTQEALGTVASQTRAVGERAAKLVGIELPKKAAPAKKAAPAKKAAPAKKAAAKKAPAKKAAAKKVTQK.

The segment covering 162–180 (KAAPAKKAAPAKKAAPAKK) has biased composition (low complexity). The tract at residues 162-199 (KAAPAKKAAPAKKAAPAKKAAAKKAPAKKAAAKKVTQK) is disordered. Basic residues predominate over residues 181-199 (AAAKKAPAKKAAAKKVTQK).

To M.leprae HbhA. Glycosylated. Glycosylation may protect the protein from proteolytic degradation and be important for hemagglutination. It suggests that the carbohydrate moiety may be located within the C-terminal domain of HbhA.

It is found in the cell surface. Functionally, required for extrapulmonary dissemination. Mediates adherence to epithelial cells by binding to sulfated glycoconjugates present at the surface of these cells. This is Heparin-binding hemagglutinin (hbhA) from Mycobacterium tuberculosis (strain CDC 1551 / Oshkosh).